The sequence spans 89 residues: Small ribosomal subunit protein uS15 (89 aa).

It belongs to the universal ribosomal protein uS15 family. Part of the 30S ribosomal subunit. Forms a bridge to the 50S subunit in the 70S ribosome, contacting the 23S rRNA.

Functionally, one of the primary rRNA binding proteins, it binds directly to 16S rRNA where it helps nucleate assembly of the platform of the 30S subunit by binding and bridging several RNA helices of the 16S rRNA. In terms of biological role, forms an intersubunit bridge (bridge B4) with the 23S rRNA of the 50S subunit in the ribosome. This chain is Small ribosomal subunit protein uS15, found in Bartonella tribocorum (strain CIP 105476 / IBS 506).